A 966-amino-acid polypeptide reads, in one-letter code: Phosphoenolpyruvate carboxylase, housekeeping isozyme (966 aa).

Position 11 is a phosphoserine (S11). Catalysis depends on residues H172 and K601.

It belongs to the PEPCase type 1 family. Homotetramer. The cofactor is Mg(2+).

Its subcellular location is the cytoplasm. The catalysed reaction is oxaloacetate + phosphate = phosphoenolpyruvate + hydrogencarbonate. By light-reversible phosphorylation. Through the carboxylation of phosphoenolpyruvate (PEP) it forms oxaloacetate, a four-carbon dicarboxylic acid source for the tricarboxylic acid cycle. The chain is Phosphoenolpyruvate carboxylase, housekeeping isozyme from Saccharum hybrid (Sugarcane).